The following is a 544-amino-acid chain: Methionine--tRNA ligase (544 aa).

The short motif at 10-20 is the 'HIGH' region element; the sequence is PYANGSLHLGH. Cys-141, Cys-144, Cys-153, and Cys-156 together coordinate Zn(2+). A 'KMSKS' region motif is present at residues 329–333; it reads KLSTS. Thr-332 is an ATP binding site.

The protein belongs to the class-I aminoacyl-tRNA synthetase family. MetG type 1 subfamily. Monomer. Zn(2+) serves as cofactor.

The protein resides in the cytoplasm. It catalyses the reaction tRNA(Met) + L-methionine + ATP = L-methionyl-tRNA(Met) + AMP + diphosphate. Its function is as follows. Is required not only for elongation of protein synthesis but also for the initiation of all mRNA translation through initiator tRNA(fMet) aminoacylation. This chain is Methionine--tRNA ligase, found in Bacillus cereus (strain G9842).